The chain runs to 232 residues: Phosphatidylserine decarboxylase proenzyme (232 aa).

The active-site Schiff-base intermediate with substrate; via pyruvic acid is Ser190. Pyruvic acid (Ser); by autocatalysis is present on Ser190.

It belongs to the phosphatidylserine decarboxylase family. PSD-A subfamily. In terms of assembly, heterodimer of a large membrane-associated beta subunit and a small pyruvoyl-containing alpha subunit. It depends on pyruvate as a cofactor. Is synthesized initially as an inactive proenzyme. Formation of the active enzyme involves a self-maturation process in which the active site pyruvoyl group is generated from an internal serine residue via an autocatalytic post-translational modification. Two non-identical subunits are generated from the proenzyme in this reaction, and the pyruvate is formed at the N-terminus of the alpha chain, which is derived from the carboxyl end of the proenzyme. The post-translation cleavage follows an unusual pathway, termed non-hydrolytic serinolysis, in which the side chain hydroxyl group of the serine supplies its oxygen atom to form the C-terminus of the beta chain, while the remainder of the serine residue undergoes an oxidative deamination to produce ammonia and the pyruvoyl prosthetic group on the alpha chain.

Its subcellular location is the cell membrane. The enzyme catalyses a 1,2-diacyl-sn-glycero-3-phospho-L-serine + H(+) = a 1,2-diacyl-sn-glycero-3-phosphoethanolamine + CO2. The protein operates within phospholipid metabolism; phosphatidylethanolamine biosynthesis; phosphatidylethanolamine from CDP-diacylglycerol: step 2/2. Its function is as follows. Catalyzes the formation of phosphatidylethanolamine (PtdEtn) from phosphatidylserine (PtdSer). The sequence is that of Phosphatidylserine decarboxylase proenzyme from Brucella canis (strain ATCC 23365 / NCTC 10854 / RM-666).